A 390-amino-acid polypeptide reads, in one-letter code: Transposase for insertion sequence element IS256 in transposon Tn4001 (390 aa).

The protein belongs to the transposase mutator family.

Its function is as follows. Required for the transposition of the insertion element. This is Transposase for insertion sequence element IS256 in transposon Tn4001 from Enterococcus faecalis (strain ATCC 700802 / V583).